The chain runs to 277 residues: Diaminopimelate epimerase (277 aa).

3 residues coordinate substrate: asparagine 13, glutamine 46, and asparagine 66. Cysteine 75 (proton donor) is an active-site residue. Substrate contacts are provided by residues 76-77 (GN), asparagine 160, asparagine 193, and 211-212 (ER). Cysteine 220 functions as the Proton acceptor in the catalytic mechanism. 221 to 222 (GS) contacts substrate.

Belongs to the diaminopimelate epimerase family. Homodimer.

It is found in the cytoplasm. The catalysed reaction is (2S,6S)-2,6-diaminopimelate = meso-2,6-diaminopimelate. It functions in the pathway amino-acid biosynthesis; L-lysine biosynthesis via DAP pathway; DL-2,6-diaminopimelate from LL-2,6-diaminopimelate: step 1/1. Catalyzes the stereoinversion of LL-2,6-diaminopimelate (L,L-DAP) to meso-diaminopimelate (meso-DAP), a precursor of L-lysine and an essential component of the bacterial peptidoglycan. The protein is Diaminopimelate epimerase of Legionella pneumophila (strain Paris).